A 94-amino-acid chain; its full sequence is Large ribosomal subunit protein bL28 (94 aa).

The interval 1-21 is disordered; that stretch reads MARRCEVTGRGTVSGNNVSHS. A compositionally biased stretch (polar residues) spans 11–20; the sequence is GTVSGNNVSH.

Belongs to the bacterial ribosomal protein bL28 family.

The sequence is that of Large ribosomal subunit protein bL28 from Leptospira interrogans serogroup Icterohaemorrhagiae serovar copenhageni (strain Fiocruz L1-130).